The primary structure comprises 805 residues: MWDQGGQPWQQWPLNQQQWMQSFQHQQDPSQIDWAALAQAWIAQREASGQQSMVEQPPGMMPNGQDMSTMESGPNNHGNFQGDSNFNRMWQPEWGMHQQPPHPPPDQPWMPPTPGPMDIVPPSEDSNSQDSGEFAPDNRHIFNQNNHNFGGPPDNFAVGPVNQFDYQHGAAFGPPQGGFHPPYWQPGPPGPPAPPQNRRERPSSFRDRQRSPIALPVKQEPPQIDAVKRRTLPAWIREGLEKMEREKQKKLEKERMEQQRSQLSKKEKKATEDAEGGDGPRLPQRSKFDSDEEEEDTENVEAASSGKVTRSPSPVPQEEHSDPEMTEEEKEYQMMLLTKMLLTEILLDVTDEEIYYVAKDAHRKATKAPAKQLAQSSALASLTGLGGLGGYGSGDSEDERSDRGSESSDTDDEELRHRIRQKQEAFWRKEKEQQLLHDKQMEEEKQQTERVTKEMNEFIHKEQNSLSLLEAREADGDVVNEKKRTPNETTSVLEPKKEHKEKEKQGRSRSGSSSSGSSSSNSRTSSTSSTVSSSSYSSSSGSSRTSSRSSSPKRKKRHSRSRSPTIKARRSRSRSYSRRIKIESNRARVKIRDRRRSNRNSIERERRRNRSPSRERRRSRSRSRDRRTNRASRSRSRDRRKIDDQRGNLSGNSHKHKGEAKEQERKKERSRSIDKDRKKKDKEREREQDKRKEKQKREEKDFKFSSQDDRLKRKRESERTFSRSGSISVKIIRHDSRQDSKKSTTKDSKKHSGSDSSGRSSSESPGSSKEKKAKKPKHSRSRSVEKSQRSGKKASRKHKSKSRSR.

Positions 74-88 (PNNHGNFQGDSNFNR) are enriched in polar residues. Disordered stretches follow at residues 74-331 (PNNH…EEKE) and 382-805 (LTGL…SRSR). 2 stretches are compositionally biased toward pro residues: residues 100-115 (PPHP…PTPG) and 183-195 (YWQP…PAPP). Positions 197–210 (NRRERPSSFRDRQR) are enriched in basic and acidic residues. A phosphoserine mark is found at Ser204 and Ser211. Lys218 is covalently cross-linked (Glycyl lysine isopeptide (Lys-Gly) (interchain with G-Cter in SUMO2)). Positions 237 to 276 (REGLEKMEREKQKKLEKERMEQQRSQLSKKEKKATEDAEG) form a coiled coil. Residues 238–258 (EGLEKMEREKQKKLEKERMEQ) show a composition bias toward basic and acidic residues. Ser290, Ser304, Ser313, and Ser321 each carry phosphoserine. The span at 290–299 (SDEEEEDTEN) shows a compositional bias: acidic residues. Residues 384 to 393 (GLGGLGGYGS) show a composition bias toward gly residues. Residues 421–463 (QKQEAFWRKEKEQQLLHDKQMEEEKQQTERVTKEMNEFIHKEQ) show a composition bias toward basic and acidic residues. Residues 429–461 (KEKEQQLLHDKQMEEEKQQTERVTKEMNEFIHK) are a coiled coil. Ser465 and Ser467 each carry phosphoserine. Basic and acidic residues-rich tracts occupy residues 470 to 486 (EARE…KRTP) and 494 to 506 (EPKK…EKQG). Position 485 is a phosphothreonine (Thr485). A Glycyl lysine isopeptide (Lys-Gly) (interchain with G-Cter in SUMO2) cross-link involves residue Lys496. The span at 508–550 (SRSGSSSSGSSSSNSRTSSTSSTVSSSSYSSSSGSSRTSSRSS) shows a compositional bias: low complexity. Basic residues-rich tracts occupy residues 551–579 (SPKR…YSRR), 587–598 (ARVKIRDRRRSN), and 607–639 (RRNR…SRDR). The segment covering 659 to 721 (EAKEQERKKE…KRKRESERTF (63 aa)) has biased composition (basic and acidic residues). Residues 673-703 (IDKDRKKKDKEREREQDKRKEKQKREEKDFK) adopt a coiled-coil conformation. Lys703 is covalently cross-linked (Glycyl lysine isopeptide (Lys-Gly) (interchain with G-Cter in SUMO2)). A Phosphoserine modification is found at Ser726. The segment covering 732–753 (IRHDSRQDSKKSTTKDSKKHSG) has biased composition (basic and acidic residues). Over residues 754-767 (SDSSGRSSSESPGS) the composition is skewed to low complexity. Composition is skewed to basic residues over residues 771–781 (KKAKKPKHSRS) and 789–805 (RSGK…SRSR).

This sequence belongs to the splicing factor SR family. In terms of assembly, interacts with PNN. Expressed in heart, skeletal muscle, thymus, spleen, kidney, liver, placenta and leukocytes.

It is found in the nucleus speckle. The polypeptide is Arginine/serine-rich protein PNISR (PNISR) (Homo sapiens (Human)).